The sequence spans 475 residues: Argininosuccinate lyase (475 aa).

Belongs to the lyase 1 family. Argininosuccinate lyase subfamily.

It localises to the cytoplasm. The catalysed reaction is 2-(N(omega)-L-arginino)succinate = fumarate + L-arginine. It functions in the pathway amino-acid biosynthesis; L-arginine biosynthesis; L-arginine from L-ornithine and carbamoyl phosphate: step 3/3. This Leifsonia xyli subsp. xyli (strain CTCB07) protein is Argininosuccinate lyase.